Here is a 227-residue protein sequence, read N- to C-terminus: Transmembrane emp24 domain-containing protein 1 (227 aa).

An N-terminal signal peptide occupies residues methionine 1–glycine 23. Over alanine 24 to asparagine 194 the chain is Extracellular. Residues lysine 43–phenylalanine 125 form the GOLD domain. The stretch at glutamate 145–glutamine 170 forms a coiled coil. A helical transmembrane segment spans residues phenylalanine 195 to leucine 215. At lysine 216–threonine 227 the chain is on the cytoplasmic side. A COPII vesicle coat-binding motif is present at residues phenylalanine 218–phenylalanine 219. Positions phenylalanine 218–threonine 227 match the COPI vesicle coat-binding motif.

The protein belongs to the EMP24/GP25L family. As to quaternary structure, homodimer in endoplasmic reticulum, endoplasmic reticulum-Golgi intermediate compartment and cis-Golgi network. Interacts with IL1RL1. Interacts with RNF26; this interaction is important to modulate innate immune signaling through the cGAS-STING pathway. As to expression, widely expressed.

The protein resides in the cell membrane. Its subcellular location is the endoplasmic reticulum membrane. The protein localises to the golgi apparatus. It is found in the cis-Golgi network membrane. It localises to the endoplasmic reticulum-Golgi intermediate compartment membrane. Its function is as follows. Potential role in vesicular protein trafficking, mainly in the early secretory pathway. May act as a cargo receptor at the lumenal side for incorporation of secretory cargo molecules into transport vesicles and may be involved in vesicle coat formation at the cytoplasmic side. Plays a positive role in IL-33-mediated IL-8 and IL-6 production by interacting with interleukin-33 receptor IL1RL1. Also plays a role in the modulation of innate immune signaling through the cGAS-STING pathway by interacting with RNF26. The protein is Transmembrane emp24 domain-containing protein 1 (TMED1) of Homo sapiens (Human).